Reading from the N-terminus, the 1463-residue chain is Alpha-agarase (1463 aa).

The N-terminal stretch at 1–27 (MITSSKKIVSAMLSTSLWIGVASAAYA) is a signal peptide. Residues 28-684 (ETTNVEAEGY…PSTLSESIFT (657 aa)) constitute a propeptide that is removed on maturation. Disordered regions lie at residues 166-191 (VTPE…PGTP) and 512-549 (TDDI…PQPG). Polar residues predominate over residues 518-536 (CANTPSGETANATGCSSSQ). A PA14 domain is found at 534–677 (SSQEGGGTDP…GGTNFVHPST (144 aa)). The CBM6 domain occupies 701–832 (IIVELESFVF…QWSGDRVRFT (132 aa)).

This sequence belongs to the glycosyl hydrolase 96 family. As to quaternary structure, monomer. The cofactor is Ca(2+).

The enzyme catalyses Endohydrolysis of 1,3-alpha-L-galactosidic linkages in agarose, yielding agarotetraose as the major product.. Alpha-agarase. Hydrolyzes agarose, agarohexaose, neoagarohexaose and porphyran. Hydrolysis of porphyran by this enzyme improves its antioxidant activity. Does not hydrolyze kappa-carrageenan, iota-carrageenen or lambda-carrageenan. The sequence is that of Alpha-agarase from Thalassotalea agarivorans (Thalassomonas agarivorans).